Here is a 221-residue protein sequence, read N- to C-terminus: ATP synthase subunit delta (221 aa).

Over residues 1–13 the composition is skewed to basic and acidic residues; it reads MGPVPEEHQRESE. Residues 1–31 are disordered; that stretch reads MGPVPEEHQRESETVASNGANESGAAVTGIP.

This sequence belongs to the ATPase delta chain family. F-type ATPases have 2 components, F(1) - the catalytic core - and F(0) - the membrane proton channel. F(1) has five subunits: alpha(3), beta(3), gamma(1), delta(1), epsilon(1). F(0) has three main subunits: a(1), b(2) and c(10-14). The alpha and beta chains form an alternating ring which encloses part of the gamma chain. F(1) is attached to F(0) by a central stalk formed by the gamma and epsilon chains, while a peripheral stalk is formed by the delta and b chains.

The protein resides in the cell inner membrane. In terms of biological role, f(1)F(0) ATP synthase produces ATP from ADP in the presence of a proton or sodium gradient. F-type ATPases consist of two structural domains, F(1) containing the extramembraneous catalytic core and F(0) containing the membrane proton channel, linked together by a central stalk and a peripheral stalk. During catalysis, ATP synthesis in the catalytic domain of F(1) is coupled via a rotary mechanism of the central stalk subunits to proton translocation. Functionally, this protein is part of the stalk that links CF(0) to CF(1). It either transmits conformational changes from CF(0) to CF(1) or is implicated in proton conduction. The protein is ATP synthase subunit delta of Granulibacter bethesdensis (strain ATCC BAA-1260 / CGDNIH1).